Consider the following 235-residue polypeptide: Orotidine 5'-phosphate decarboxylase (235 aa).

Residues aspartate 11, lysine 33, 60–69 (DLKFHDIPNT), threonine 119, arginine 180, glutamine 189, glycine 209, and arginine 210 contribute to the substrate site. Catalysis depends on lysine 62, which acts as the Proton donor.

The protein belongs to the OMP decarboxylase family. Type 1 subfamily. In terms of assembly, homodimer.

The catalysed reaction is orotidine 5'-phosphate + H(+) = UMP + CO2. It participates in pyrimidine metabolism; UMP biosynthesis via de novo pathway; UMP from orotate: step 2/2. Functionally, catalyzes the decarboxylation of orotidine 5'-monophosphate (OMP) to uridine 5'-monophosphate (UMP). This Alkalilimnicola ehrlichii (strain ATCC BAA-1101 / DSM 17681 / MLHE-1) protein is Orotidine 5'-phosphate decarboxylase.